A 347-amino-acid polypeptide reads, in one-letter code: Phosphoribosylformylglycinamidine cyclo-ligase (347 aa).

It belongs to the AIR synthase family.

The protein resides in the cytoplasm. It carries out the reaction 2-formamido-N(1)-(5-O-phospho-beta-D-ribosyl)acetamidine + ATP = 5-amino-1-(5-phospho-beta-D-ribosyl)imidazole + ADP + phosphate + H(+). It participates in purine metabolism; IMP biosynthesis via de novo pathway; 5-amino-1-(5-phospho-D-ribosyl)imidazole from N(2)-formyl-N(1)-(5-phospho-D-ribosyl)glycinamide: step 2/2. The polypeptide is Phosphoribosylformylglycinamidine cyclo-ligase (Hydrogenovibrio crunogenus (strain DSM 25203 / XCL-2) (Thiomicrospira crunogena)).